The primary structure comprises 175 residues: Adenine phosphoribosyltransferase (175 aa).

Belongs to the purine/pyrimidine phosphoribosyltransferase family. In terms of assembly, homodimer.

It localises to the cytoplasm. The enzyme catalyses AMP + diphosphate = 5-phospho-alpha-D-ribose 1-diphosphate + adenine. It functions in the pathway purine metabolism; AMP biosynthesis via salvage pathway; AMP from adenine: step 1/1. Functionally, catalyzes a salvage reaction resulting in the formation of AMP, that is energically less costly than de novo synthesis. This chain is Adenine phosphoribosyltransferase, found in Francisella tularensis subsp. holarctica (strain FTNF002-00 / FTA).